Consider the following 337-residue polypeptide: Glyceraldehyde-3-phosphate dehydrogenase 3, cytosolic (337 aa).

The segment at 1–151 (MAKIKIGING…YKSDINIVSN (151 aa)) is binding to NAD. NAD(+) is bound by residues 13-14 (RI), Asp-35, and Arg-82. The tract at residues 152–337 (ASCTTNCLAP…DLIRHMNSTK (186 aa)) is catalytic. Residues 153 to 155 (SCT), Thr-184, 213 to 214 (TG), and Arg-236 each bind D-glyceraldehyde 3-phosphate. Residue Cys-154 is the Nucleophile of the active site. Residue Asn-318 participates in NAD(+) binding.

It belongs to the glyceraldehyde-3-phosphate dehydrogenase family. As to quaternary structure, homotetramer.

It is found in the cytoplasm. The enzyme catalyses D-glyceraldehyde 3-phosphate + phosphate + NAD(+) = (2R)-3-phospho-glyceroyl phosphate + NADH + H(+). The protein operates within carbohydrate degradation; glycolysis; pyruvate from D-glyceraldehyde 3-phosphate: step 1/5. In terms of biological role, key enzyme in glycolysis that catalyzes the first step of the pathway by converting D-glyceraldehyde 3-phosphate (G3P) into 3-phospho-D-glyceroyl phosphate. Essential for the maintenance of cellular ATP levels and carbohydrate metabolism. This is Glyceraldehyde-3-phosphate dehydrogenase 3, cytosolic (GAPC3) from Zea mays (Maize).